Consider the following 76-residue polypeptide: uncharacterized protein (76 aa).

This is an uncharacterized protein from Treponema pallidum (strain Nichols).